Here is a 671-residue protein sequence, read N- to C-terminus: MKQIEQYIEQLRQQLRYWNFLYYAKDAPEVSDVEYDWLMMKLRELERQWPDLKTADSPTQHIGYKAQSKFRKVIHEVPMLSLDHIFNDTSFLAFDRRIRNRLQYGNNYLTYCCELKFDGIAVSLLYKHGKLIRAATRGDGHIGEDVTDNIRTICSIPLQLKDDGHIPRLIEIRGEVIMSEDAFRHLNETAKKNKSKRFANPRNAAAGSLRQVDPSITATRLLSFFCYGVGRIDSKKIPAAHLELLQQFKIWGLPVSNYRRYCVGHQEVLDFYSYVSKVRSKLGFNIDGIVIKVNALVQQQQLGFVARAPRWAIAYKLPANEQLTEIQNIDFQVGRTGIITPVARLKPVYISGAYISNASLHSFAEIKRLGLRIGDTVVIRLAGNIIPQIVNVVVSKRSIKTSPVLYPLYCPVCGSKVKQNNKEKTIICTAGMICSAQLKEALKHFVSRRAMNIYGMGGKIIDQLVDLKIIQNPVDLFRLNQDQLTCLKNMGQKKTKKLLDAIEYAKKTTFARFLYAIGIREIGETKAAYLADYYKHIDALMAADIESLTKIQDIGIIVATNVLNFFHNKHNIAIIEELCSPKIGIKFLSTLEKNNYFSGKNIVFTGTLAFLSREEAIDMLIALGARIRSSVSSKIDLLIAGKNTGFKLTKAKQLQIKIIEEAEFYQILGIR.

Residues 32–36 (DVEYD), 81–82 (SL), and Glu-114 contribute to the NAD(+) site. Lys-116 (N6-AMP-lysine intermediate) is an active-site residue. Arg-137, Glu-175, Lys-292, and Lys-316 together coordinate NAD(+). Zn(2+) is bound by residues Cys-410, Cys-413, Cys-428, and Cys-434. The 80-residue stretch at 592–671 (EKNNYFSGKN…AEFYQILGIR (80 aa)) folds into the BRCT domain.

It belongs to the NAD-dependent DNA ligase family. LigA subfamily. Mg(2+) is required as a cofactor. The cofactor is Mn(2+).

It catalyses the reaction NAD(+) + (deoxyribonucleotide)n-3'-hydroxyl + 5'-phospho-(deoxyribonucleotide)m = (deoxyribonucleotide)n+m + AMP + beta-nicotinamide D-nucleotide.. DNA ligase that catalyzes the formation of phosphodiester linkages between 5'-phosphoryl and 3'-hydroxyl groups in double-stranded DNA using NAD as a coenzyme and as the energy source for the reaction. It is essential for DNA replication and repair of damaged DNA. The sequence is that of DNA ligase from Baumannia cicadellinicola subsp. Homalodisca coagulata.